We begin with the raw amino-acid sequence, 76 residues long: Tautomerase PptA (76 aa).

Pro-2 functions as the Proton acceptor; via imino nitrogen in the catalytic mechanism.

It belongs to the 4-oxalocrotonate tautomerase family. PptA subfamily. Homodimer.

It localises to the cytoplasm. The sequence is that of Tautomerase PptA from Pectobacterium carotovorum subsp. carotovorum (strain PC1).